The chain runs to 297 residues: Transmembrane protein 169 (297 aa).

The interval 1 to 85 (MEEPTAVEGQ…KEEEGDDFLD (85 aa)) is disordered. Topologically, residues 1–159 (MEEPTAVEGQ…CQMGADRGPH (159 aa)) are extracellular. Positions 61–85 (KTDEEPGESEGGDQPKEEEGDDFLD) are enriched in acidic residues. A helical transmembrane segment spans residues 160-180 (VVLWTLICLPVVFILSFVVSF). Residues 181–210 (YYGTITWYNIFLVYNEERTFWHKISYCPCL) are Cytoplasmic-facing. A helical membrane pass occupies residues 211 to 231 (VLFYPVLIMAMASSLGLYAAV). The Extracellular portion of the chain corresponds to 232–297 (VQLSWSWEAW…PIQEVETSTV (66 aa)).

It is found in the membrane. This is Transmembrane protein 169 (TMEM169) from Homo sapiens (Human).